The chain runs to 203 residues: Small ribosomal subunit protein uS4 (203 aa).

The region spanning Arg93–Val156 is the S4 RNA-binding domain.

Belongs to the universal ribosomal protein uS4 family. Part of the 30S ribosomal subunit. Contacts protein S5. The interaction surface between S4 and S5 is involved in control of translational fidelity.

In terms of biological role, one of the primary rRNA binding proteins, it binds directly to 16S rRNA where it nucleates assembly of the body of the 30S subunit. Its function is as follows. With S5 and S12 plays an important role in translational accuracy. The sequence is that of Small ribosomal subunit protein uS4 from Streptococcus thermophilus (strain CNRZ 1066).